Consider the following 594-residue polypeptide: MDSQFFGLLVFYLAILLILAPFLGRYIRRAMEDEHYAATAWGRWLERLMYRLSGVNPAAEMTWRQYAVAVLIFSVLGFIAVYALQRLQGFLPLNPVGLGAVSPDSAFNTAISFVSNTNWQGYSPESTMSYLTQMLALTVQNFLSAAVGMSVLFALIRGFARHGCATVGNFWVDATRATLYVLLPLALALALALVSQGVIQNTAAYQEVTTLQAQSYEQARLDSTGQPMMDAAGKPLTETLVIQTQTLAMGPTASQEAIKLLGINGGGFFNANSAHPYENPTGLSNLLEMLAILIIPAALCFTFGEMVGDRRQGVAILAAMTLLFVGLAWLTQNAEQALTPALSHLSADGLLGNMEGKESRFGVAASALFAVVTTAASCGAVNTMHDSLSAMGGLGPMLLMQLGEVVFGGVGSGLYGMLAFALLGVFIAGLMIGRTPEYLGKKIEAFDMKMVSIAILVTPFLVLAGTALAVSVPQGLAGMLNPGAHGFSEVLYALSSAANNNGSAFAGLSSNTPFYNSLLGLAMWFGRFLVIVAILALAGSLAGKRRLAQSPGSMPTTGPLFIVLLIGTVLLVGALTYVPALALGPVAEHLQARP.

The next 12 helical transmembrane spans lie at 4 to 24 (QFFGLLVFYLAILLILAPFLG), 65 to 85 (QYAVAVLIFSVLGFIAVYALQ), 136 to 156 (ALTVQNFLSAAVGMSVLFALI), 179 to 199 (LYVLLPLALALALALVSQGVI), 287 to 307 (LEMLAILIIPAALCFTFGEMV), 314 to 334 (VAILAAMTLLFVGLAWLTQNA), 361 to 381 (FGVAASALFAVVTTAASCGAV), 390 to 410 (AMGGLGPMLLMQLGEVVFGGV), 413 to 433 (GLYGMLAFALLGVFIAGLMIG), 450 to 470 (MVSIAILVTPFLVLAGTALAV), 518 to 538 (LLGLAMWFGRFLVIVAILALA), and 560 to 580 (LFIVLLIGTVLLVGALTYVPA).

Belongs to the KdpA family. In terms of assembly, the system is composed of three essential subunits: KdpA, KdpB and KdpC.

The protein resides in the cell inner membrane. Part of the high-affinity ATP-driven potassium transport (or Kdp) system, which catalyzes the hydrolysis of ATP coupled with the electrogenic transport of potassium into the cytoplasm. This subunit binds the periplasmic potassium ions and delivers the ions to the membrane domain of KdpB through an intramembrane tunnel. This Bordetella avium (strain 197N) protein is Potassium-transporting ATPase potassium-binding subunit.